A 211-amino-acid chain; its full sequence is tRNA (guanine-N(7)-)-methyltransferase (211 aa).

The S-adenosyl-L-methionine site is built by E44, D69, D96, and D118. The active site involves D118. Residue K122 coordinates substrate. The interaction with RNA stretch occupies residues 124 to 129 (KHEKRR). Residues D154 and 191 to 194 (TEYE) contribute to the substrate site.

This sequence belongs to the class I-like SAM-binding methyltransferase superfamily. TrmB family.

It catalyses the reaction guanosine(46) in tRNA + S-adenosyl-L-methionine = N(7)-methylguanosine(46) in tRNA + S-adenosyl-L-homocysteine. Its pathway is tRNA modification; N(7)-methylguanine-tRNA biosynthesis. In terms of biological role, catalyzes the formation of N(7)-methylguanine at position 46 (m7G46) in tRNA. This is tRNA (guanine-N(7)-)-methyltransferase from Streptococcus agalactiae serotype Ia (strain ATCC 27591 / A909 / CDC SS700).